An 876-amino-acid chain; its full sequence is Alanine--tRNA ligase (876 aa).

Residues His568, His572, Cys670, and His674 each coordinate Zn(2+).

It belongs to the class-II aminoacyl-tRNA synthetase family. It depends on Zn(2+) as a cofactor.

It localises to the cytoplasm. The enzyme catalyses tRNA(Ala) + L-alanine + ATP = L-alanyl-tRNA(Ala) + AMP + diphosphate. Its function is as follows. Catalyzes the attachment of alanine to tRNA(Ala) in a two-step reaction: alanine is first activated by ATP to form Ala-AMP and then transferred to the acceptor end of tRNA(Ala). Also edits incorrectly charged Ser-tRNA(Ala) and Gly-tRNA(Ala) via its editing domain. The sequence is that of Alanine--tRNA ligase from Geobacter metallireducens (strain ATCC 53774 / DSM 7210 / GS-15).